The chain runs to 1416 residues: DNA-directed RNA polymerase subunit beta' (1416 aa).

Positions 60, 62, 75, and 78 each coordinate Zn(2+). Residues Asp-449, Asp-451, and Asp-453 each contribute to the Mg(2+) site. Zn(2+) is bound by residues Cys-781, Cys-855, Cys-862, and Cys-865.

Belongs to the RNA polymerase beta' chain family. As to quaternary structure, the RNAP catalytic core consists of 2 alpha, 1 beta, 1 beta' and 1 omega subunit. When a sigma factor is associated with the core the holoenzyme is formed, which can initiate transcription. Requires Mg(2+) as cofactor. The cofactor is Zn(2+).

It carries out the reaction RNA(n) + a ribonucleoside 5'-triphosphate = RNA(n+1) + diphosphate. In terms of biological role, DNA-dependent RNA polymerase catalyzes the transcription of DNA into RNA using the four ribonucleoside triphosphates as substrates. The protein is DNA-directed RNA polymerase subunit beta' of Treponema pallidum (strain Nichols).